The primary structure comprises 258 residues: 14-3-3-like protein F (258 aa).

It belongs to the 14-3-3 family.

This chain is 14-3-3-like protein F, found in Nicotiana tabacum (Common tobacco).